Here is a 1258-residue protein sequence, read N- to C-terminus: Cohesin subunit SA-1 (1258 aa).

The interval 1–84 (MITSELPVLQ…HPQQNGEGEP (84 aa)) is disordered. Residues 10 to 19 (QDSTNETTAH) show a composition bias toward polar residues. At S24 the chain carries Phosphoserine. The segment covering 53 to 62 (SPGEKSRIEA) has biased composition (basic and acidic residues). One can recognise an SCD domain in the interval 296–381 (FVHRYRDAIA…NRFKDRIVSM (86 aa)). A phosphoserine mark is found at S756, S1062, and S1065. Disordered regions lie at residues 1055–1096 (GGED…SLDN) and 1129–1148 (MGDQ…DFLH). The span at 1062 to 1074 (SVNSGSSSSKTSS) shows a compositional bias: low complexity. Basic residues predominate over residues 1076 to 1087 (RNKKGRPPLHKK). The residue at position 1093 (S1093) is a Phosphoserine. Over residues 1137 to 1146 (ESEHGSEPDF) the composition is skewed to basic and acidic residues. K1161 is covalently cross-linked (Glycyl lysine isopeptide (Lys-Gly) (interchain with G-Cter in SUMO2)).

It belongs to the SCC3 family. In terms of assembly, cohesin complexes are composed of a heterodimer between a SMC1 protein (SMC1A or SMC1B) and SMC3, which are attached via their hinge domain, and RAD21 which link them at their heads, and one STAG protein (STAG1, STAG2 or STAG3). In cohesin complexes, STAG1 is mutually exclusive with STAG2 and STAG3. Interacts directly with RAD21 in cohesin complex. The cohesin complex interacts with the cohesin loading complex subunits NIPBL/Scc2 (via HEAT repeats) and MAU2/Scc4. NIPBL directly contacts all members of the complex, RAD21, SMC1A/B, SMC3 and STAG1. Phosphorylated by PLK1. The large dissociation of cohesin from chromosome arms during prophase is partly due to its phosphorylation.

Its subcellular location is the nucleus. The protein localises to the chromosome. It is found in the centromere. Functionally, component of cohesin complex, a complex required for the cohesion of sister chromatids after DNA replication. The cohesin complex apparently forms a large proteinaceous ring within which sister chromatids can be trapped. At anaphase, the complex is cleaved and dissociates from chromatin, allowing sister chromatids to segregate. The cohesin complex may also play a role in spindle pole assembly during mitosis. This Homo sapiens (Human) protein is Cohesin subunit SA-1 (STAG1).